The sequence spans 432 residues: Enolase (432 aa).

Residue Gln164 participates in (2R)-2-phosphoglycerate binding. Glu206 functions as the Proton donor in the catalytic mechanism. Positions 243, 284, and 311 each coordinate Mg(2+). (2R)-2-phosphoglycerate contacts are provided by Lys336, Arg365, Ser366, and Lys387. Lys336 serves as the catalytic Proton acceptor.

The protein belongs to the enolase family. Mg(2+) serves as cofactor.

The protein localises to the cytoplasm. It is found in the secreted. The protein resides in the cell surface. It carries out the reaction (2R)-2-phosphoglycerate = phosphoenolpyruvate + H2O. It functions in the pathway carbohydrate degradation; glycolysis; pyruvate from D-glyceraldehyde 3-phosphate: step 4/5. Functionally, catalyzes the reversible conversion of 2-phosphoglycerate (2-PG) into phosphoenolpyruvate (PEP). It is essential for the degradation of carbohydrates via glycolysis. The protein is Enolase of Synechococcus sp. (strain JA-3-3Ab) (Cyanobacteria bacterium Yellowstone A-Prime).